Consider the following 268-residue polypeptide: Tryptophan synthase alpha chain (268 aa).

Residues Glu49 and Asp60 each act as proton acceptor in the active site.

It belongs to the TrpA family. As to quaternary structure, tetramer of two alpha and two beta chains.

The catalysed reaction is (1S,2R)-1-C-(indol-3-yl)glycerol 3-phosphate + L-serine = D-glyceraldehyde 3-phosphate + L-tryptophan + H2O. The protein operates within amino-acid biosynthesis; L-tryptophan biosynthesis; L-tryptophan from chorismate: step 5/5. The alpha subunit is responsible for the aldol cleavage of indoleglycerol phosphate to indole and glyceraldehyde 3-phosphate. This Pseudomonas paraeruginosa (strain DSM 24068 / PA7) (Pseudomonas aeruginosa (strain PA7)) protein is Tryptophan synthase alpha chain.